The sequence spans 279 residues: Diaminopimelate epimerase (279 aa).

Positions 11 and 64 each coordinate substrate. Cysteine 73 acts as the Proton donor in catalysis. Residues 74 to 75 (GN), asparagine 170, and 187 to 188 (ER) contribute to the substrate site. The active-site Proton acceptor is the cysteine 196. 197–198 (GS) serves as a coordination point for substrate. The disordered stretch occupies residues 255 to 279 (NTDHQRRRHSLSRSPSGRPRLQECR).

This sequence belongs to the diaminopimelate epimerase family. Homodimer.

It is found in the cytoplasm. It carries out the reaction (2S,6S)-2,6-diaminopimelate = meso-2,6-diaminopimelate. It participates in amino-acid biosynthesis; L-lysine biosynthesis via DAP pathway; DL-2,6-diaminopimelate from LL-2,6-diaminopimelate: step 1/1. Its function is as follows. Catalyzes the stereoinversion of LL-2,6-diaminopimelate (L,L-DAP) to meso-diaminopimelate (meso-DAP), a precursor of L-lysine. The sequence is that of Diaminopimelate epimerase from Methanopyrus kandleri (strain AV19 / DSM 6324 / JCM 9639 / NBRC 100938).